We begin with the raw amino-acid sequence, 306 residues long: Ornithine carbamoyltransferase (306 aa).

Residues 53 to 56, Gln80, Arg104, and 131 to 134 each bind carbamoyl phosphate; these read STRT and HPCQ. L-ornithine contacts are provided by residues Asn162, Asp220, and 224 to 225; that span reads SM. Carbamoyl phosphate is bound by residues 260–261 and Arg288; that span reads CL.

It belongs to the aspartate/ornithine carbamoyltransferase superfamily. OTCase family.

Its subcellular location is the cytoplasm. It catalyses the reaction carbamoyl phosphate + L-ornithine = L-citrulline + phosphate + H(+). Its pathway is amino-acid biosynthesis; L-arginine biosynthesis; L-arginine from L-ornithine and carbamoyl phosphate: step 1/3. In terms of biological role, reversibly catalyzes the transfer of the carbamoyl group from carbamoyl phosphate (CP) to the N(epsilon) atom of ornithine (ORN) to produce L-citrulline. This chain is Ornithine carbamoyltransferase, found in Dechloromonas aromatica (strain RCB).